The sequence spans 284 residues: Cell division protein FtsQ (284 aa).

At 1–31 the chain is on the cytoplasmic side; the sequence is MAQLPASMRRKRAAITSIHDKPPTRKQKLAN. A helical membrane pass occupies residues 32–52; it reads AGGWVLLVIAFVVLAVGIYGL. Topologically, residues 53–284 are periplasmic; it reads YKVITDATVA…SIAGGTKAKP (232 aa). Positions 59–128 constitute a POTRA domain; that stretch reads ATVAKLEVVG…NGIRVRVMPR (70 aa).

Belongs to the FtsQ/DivIB family. FtsQ subfamily. Part of a complex composed of FtsB, FtsL and FtsQ.

The protein localises to the cell inner membrane. Functionally, essential cell division protein. May link together the upstream cell division proteins, which are predominantly cytoplasmic, with the downstream cell division proteins, which are predominantly periplasmic. May control correct divisome assembly. The chain is Cell division protein FtsQ from Acinetobacter oleivorans (strain JCM 16667 / KCTC 23045 / DR1).